A 398-amino-acid polypeptide reads, in one-letter code: Acetate kinase (398 aa).

Asparagine 10 lines the Mg(2+) pocket. Lysine 17 is a binding site for ATP. Substrate is bound at residue arginine 89. The Proton donor/acceptor role is filled by aspartate 148. Residues 208–212 (HLGNG), 283–285 (DCR), and 331–335 (GIGEN) each bind ATP. Residue glutamate 385 coordinates Mg(2+).

Belongs to the acetokinase family. In terms of assembly, homodimer. It depends on Mg(2+) as a cofactor. The cofactor is Mn(2+).

It localises to the cytoplasm. It carries out the reaction acetate + ATP = acetyl phosphate + ADP. It functions in the pathway metabolic intermediate biosynthesis; acetyl-CoA biosynthesis; acetyl-CoA from acetate: step 1/2. Catalyzes the formation of acetyl phosphate from acetate and ATP. Can also catalyze the reverse reaction. The sequence is that of Acetate kinase from Histophilus somni (strain 2336) (Haemophilus somnus).